Reading from the N-terminus, the 192-residue chain is Imidazole glycerol phosphate synthase subunit HisH (192 aa).

A Glutamine amidotransferase type-1 domain is found at 1-192 (MIVIVDYGLG…QAIQGGFIND (192 aa)). The Nucleophile role is filled by C77. Active-site residues include H169 and E171.

In terms of assembly, heterodimer of HisH and HisF.

It localises to the cytoplasm. The enzyme catalyses 5-[(5-phospho-1-deoxy-D-ribulos-1-ylimino)methylamino]-1-(5-phospho-beta-D-ribosyl)imidazole-4-carboxamide + L-glutamine = D-erythro-1-(imidazol-4-yl)glycerol 3-phosphate + 5-amino-1-(5-phospho-beta-D-ribosyl)imidazole-4-carboxamide + L-glutamate + H(+). The catalysed reaction is L-glutamine + H2O = L-glutamate + NH4(+). Its pathway is amino-acid biosynthesis; L-histidine biosynthesis; L-histidine from 5-phospho-alpha-D-ribose 1-diphosphate: step 5/9. Its function is as follows. IGPS catalyzes the conversion of PRFAR and glutamine to IGP, AICAR and glutamate. The HisH subunit catalyzes the hydrolysis of glutamine to glutamate and ammonia as part of the synthesis of IGP and AICAR. The resulting ammonia molecule is channeled to the active site of HisF. This Staphylococcus aureus (strain bovine RF122 / ET3-1) protein is Imidazole glycerol phosphate synthase subunit HisH.